Here is a 193-residue protein sequence, read N- to C-terminus: ATP-dependent Clp protease proteolytic subunit 1 (193 aa).

The Nucleophile role is filled by Ser98. His123 is a catalytic residue.

It belongs to the peptidase S14 family. Fourteen ClpP subunits assemble into 2 heptameric rings which stack back to back to give a disk-like structure with a central cavity, resembling the structure of eukaryotic proteasomes.

It localises to the cytoplasm. It catalyses the reaction Hydrolysis of proteins to small peptides in the presence of ATP and magnesium. alpha-casein is the usual test substrate. In the absence of ATP, only oligopeptides shorter than five residues are hydrolyzed (such as succinyl-Leu-Tyr-|-NHMec, and Leu-Tyr-Leu-|-Tyr-Trp, in which cleavage of the -Tyr-|-Leu- and -Tyr-|-Trp bonds also occurs).. Its function is as follows. Cleaves peptides in various proteins in a process that requires ATP hydrolysis. Has a chymotrypsin-like activity. Plays a major role in the degradation of misfolded proteins. In Bacillus cereus (strain ZK / E33L), this protein is ATP-dependent Clp protease proteolytic subunit 1.